The chain runs to 105 residues: Met repressor (105 aa).

This sequence belongs to the MetJ family. As to quaternary structure, homodimer.

Its subcellular location is the cytoplasm. Its function is as follows. This regulatory protein, when combined with SAM (S-adenosylmethionine) represses the expression of the methionine regulon and of enzymes involved in SAM synthesis. The chain is Met repressor from Yersinia enterocolitica serotype O:8 / biotype 1B (strain NCTC 13174 / 8081).